Consider the following 152-residue polypeptide: Phospholipase A2 pkP2 (152 aa).

The signal sequence occupies residues Met-1–Ala-21. A propeptide spanning residues Ile-22–Leu-27 is cleaved from the precursor. 7 disulfide bridges follow: Cys-38/Cys-104, Cys-54/Cys-151, Cys-56/Cys-72, Cys-71/Cys-132, Cys-78/Cys-125, Cys-88/Cys-118, and Cys-111/Cys-123. Residues Tyr-55, Gly-57, and Gly-59 each coordinate Ca(2+). His-75 is a catalytic residue. A Ca(2+)-binding site is contributed by Asp-76. Residue Asp-126 is part of the active site.

The protein belongs to the phospholipase A2 family. Group I subfamily. Ca(2+) is required as a cofactor.

Its subcellular location is the secreted. It catalyses the reaction a 1,2-diacyl-sn-glycero-3-phosphocholine + H2O = a 1-acyl-sn-glycero-3-phosphocholine + a fatty acid + H(+). Its function is as follows. PA2 catalyzes the calcium-dependent hydrolysis of the 2-acyl groups in 3-sn-phosphoglycerides. This Laticauda semifasciata (Black-banded sea krait) protein is Phospholipase A2 pkP2.